We begin with the raw amino-acid sequence, 430 residues long: Dihydrofolate synthase/folylpolyglutamate synthase (430 aa).

51-54 (GKGS) provides a ligand contact to ATP. Position 75 (S75) interacts with Mg(2+). 114 to 117 (TEYG) is a binding site for 7,8-dihydropteroate. Residue E145 coordinates Mg(2+). A 7,8-dihydropteroate-binding site is contributed by 152 to 154 (FDS). Residue H172 participates in Mg(2+) binding. ATP is bound by residues Q263, R302, and D315.

Belongs to the folylpolyglutamate synthase family. As to quaternary structure, monomer. Mg(2+) is required as a cofactor.

It catalyses the reaction 7,8-dihydropteroate + L-glutamate + ATP = 7,8-dihydrofolate + ADP + phosphate + H(+). The enzyme catalyses (6S)-5,6,7,8-tetrahydrofolyl-(gamma-L-Glu)(n) + L-glutamate + ATP = (6S)-5,6,7,8-tetrahydrofolyl-(gamma-L-Glu)(n+1) + ADP + phosphate + H(+). The protein operates within cofactor biosynthesis; tetrahydrofolate biosynthesis; 7,8-dihydrofolate from 2-amino-4-hydroxy-6-hydroxymethyl-7,8-dihydropteridine diphosphate and 4-aminobenzoate: step 2/2. It participates in cofactor biosynthesis; tetrahydrofolylpolyglutamate biosynthesis. Functions in two distinct reactions of the de novo folate biosynthetic pathway. Catalyzes the addition of a glutamate residue to dihydropteroate (7,8-dihydropteroate or H2Pte) to form dihydrofolate (7,8-dihydrofolate monoglutamate or H2Pte-Glu). Also catalyzes successive additions of L-glutamate to tetrahydrofolate, leading to folylpolyglutamate derivatives. In Bacillus subtilis (strain 168), this protein is Dihydrofolate synthase/folylpolyglutamate synthase (folC).